Consider the following 138-residue polypeptide: MVVAEANSGRAVYWGTGRRKSAVARVRLVPGTGQLIVNGKPGDLYFQFNANYLGVIKAPLETLGLENEYDILVKAEGGGLTGQADSVRLGVARALCQLDPENRPPLKTEGYLTRDPRAKERKKYGLHKARKAPQYSKR.

Positions 100 to 118 are enriched in basic and acidic residues; it reads PENRPPLKTEGYLTRDPRA. Residues 100-138 form a disordered region; the sequence is PENRPPLKTEGYLTRDPRAKERKKYGLHKARKAPQYSKR. The segment covering 119 to 138 has biased composition (basic residues); sequence KERKKYGLHKARKAPQYSKR.

The protein belongs to the universal ribosomal protein uS9 family.

In Trichormus variabilis (strain ATCC 29413 / PCC 7937) (Anabaena variabilis), this protein is Small ribosomal subunit protein uS9.